The sequence spans 284 residues: Ribose-5-phosphate isomerase (284 aa).

This sequence belongs to the ribose 5-phosphate isomerase family.

Its subcellular location is the cytoplasm. The enzyme catalyses aldehydo-D-ribose 5-phosphate = D-ribulose 5-phosphate. The protein operates within carbohydrate degradation; pentose phosphate pathway; D-ribose 5-phosphate from D-ribulose 5-phosphate (non-oxidative stage): step 1/1. This is Ribose-5-phosphate isomerase (RKI1) from Lodderomyces elongisporus (strain ATCC 11503 / CBS 2605 / JCM 1781 / NBRC 1676 / NRRL YB-4239) (Yeast).